A 151-amino-acid polypeptide reads, in one-letter code: uncharacterized protein (151 aa).

This sequence to B.subtilis pcf and to sigma factors.

This is an uncharacterized protein from Bacillus subtilis (strain 168).